Reading from the N-terminus, the 635-residue chain is Endo-1,4-beta-xylanase B (635 aa).

The region spanning 1–337 (MNLKTAYEPY…KEAYYAVLKA (337 aa)) is the GH10 domain. Glutamate 150 acts as the Proton donor in catalysis. Glutamate 255 serves as the catalytic Nucleophile.

It belongs to the glycosyl hydrolase 10 (cellulase F) family.

The enzyme catalyses Endohydrolysis of (1-&gt;4)-beta-D-xylosidic linkages in xylans.. It functions in the pathway glycan degradation; xylan degradation. Its function is as follows. B.fibrisolvens is located in the rumen of ruminant animals, where it contributes to the animal's digestion of plant material by hydrolyzing hemicellulose with its xylanases. The chain is Endo-1,4-beta-xylanase B (xynB) from Butyrivibrio fibrisolvens.